Consider the following 130-residue polypeptide: Small ribosomal subunit protein uS11 (130 aa).

The protein belongs to the universal ribosomal protein uS11 family. In terms of assembly, part of the 30S ribosomal subunit. Interacts with proteins S7 and S18. Binds to IF-3.

In terms of biological role, located on the platform of the 30S subunit, it bridges several disparate RNA helices of the 16S rRNA. Forms part of the Shine-Dalgarno cleft in the 70S ribosome. This Prochlorococcus marinus (strain MIT 9312) protein is Small ribosomal subunit protein uS11.